The chain runs to 100 residues: UPF0213 protein YhbQ (100 aa).

The GIY-YIG domain occupies 2-77 (TPWFLYLIRT…KQLTKRQKER (76 aa)).

This sequence belongs to the UPF0213 family.

The sequence is that of UPF0213 protein YhbQ from Escherichia fergusonii (strain ATCC 35469 / DSM 13698 / CCUG 18766 / IAM 14443 / JCM 21226 / LMG 7866 / NBRC 102419 / NCTC 12128 / CDC 0568-73).